The sequence spans 229 residues: Heptaprenylglyceryl phosphate synthase (229 aa).

A sn-glycerol 1-phosphate-binding site is contributed by Lys12. The Mg(2+) site is built by Asp14 and Ser40. Sn-glycerol 1-phosphate is bound by residues 159–164 (YLEYSG), Gly189, and 209–210 (GN).

Belongs to the GGGP/HepGP synthase family. Group I subfamily. As to quaternary structure, homodimer. Mg(2+) is required as a cofactor.

It catalyses the reaction sn-glycerol 1-phosphate + all-trans-heptaprenyl diphosphate = 3-heptaprenyl-sn-glycero-1-phosphate + diphosphate. The protein operates within membrane lipid metabolism; glycerophospholipid metabolism. Functionally, prenyltransferase that catalyzes in vivo the transfer of the heptaprenyl moiety of heptaprenyl pyrophosphate (HepPP; 35 carbon atoms) to the C3 hydroxyl of sn-glycerol-1-phosphate (G1P), producing heptaprenylglyceryl phosphate (HepGP). This reaction is an ether-bond-formation step in the biosynthesis of archaea-type G1P-based membrane lipids found in Bacillales. The polypeptide is Heptaprenylglyceryl phosphate synthase (Bacillus cereus (strain ATCC 14579 / DSM 31 / CCUG 7414 / JCM 2152 / NBRC 15305 / NCIMB 9373 / NCTC 2599 / NRRL B-3711)).